The following is a 329-amino-acid chain: Ribosomal protein L11 methyltransferase (329 aa).

4 residues coordinate S-adenosyl-L-methionine: threonine 177, glycine 198, aspartate 220, and asparagine 264.

This sequence belongs to the methyltransferase superfamily. PrmA family.

Its subcellular location is the cytoplasm. The catalysed reaction is L-lysyl-[protein] + 3 S-adenosyl-L-methionine = N(6),N(6),N(6)-trimethyl-L-lysyl-[protein] + 3 S-adenosyl-L-homocysteine + 3 H(+). Functionally, methylates ribosomal protein L11. This is Ribosomal protein L11 methyltransferase from Helicobacter acinonychis (strain Sheeba).